The chain runs to 398 residues: Thyrotropin-releasing hormone receptor (398 aa).

The Extracellular portion of the chain corresponds to 1–28; the sequence is MENETGSELNQTQLQPRAVVALEYQVVT. N-linked (GlcNAc...) asparagine glycosylation is found at N3 and N10. A helical transmembrane segment spans residues 29-51; sequence ILLVLIICGLGIVGNIMVVLVVM. The Cytoplasmic segment spans residues 52 to 61; that stretch reads RTKHMRTPTN. Residues 62 to 83 traverse the membrane as a helical segment; sequence CYLVSLAVADLMVLVAAGLPNI. Residues 84–99 are Extracellular-facing; the sequence is TDSIYGSWVYGYVGCL. The cysteines at positions 98 and 179 are disulfide-linked. The helical transmembrane segment at 100–121 threads the bilayer; the sequence is CITYLQYLGINASSCSITAFTI. Residues 122-144 are Cytoplasmic-facing; that stretch reads ERYIAICHPIKAQFLCTFSRAKK. A helical membrane pass occupies residues 145–168; it reads IIIFVWAFTSIYCMLWFFLLDLNI. The Extracellular segment spans residues 169–193; sequence STYKDAIVVSCGYKISRNYYSPIYL. The helical transmembrane segment at 194 to 215 threads the bilayer; that stretch reads MDFGVFYVVPMILATVLYGFIA. Residues 216 to 266 lie on the Cytoplasmic side of the membrane; it reads RILFLNPIPSDPKENSNMWKNDSTHQNKNLNSKTSNRYFNSTVSSRKQVTK. Residues 267–288 traverse the membrane as a helical segment; that stretch reads MLAVVVILFALLWMPYRTLVVV. The Extracellular segment spans residues 289-296; the sequence is NSFLSSPF. The chain crosses the membrane as a helical span at residues 297–319; that stretch reads QENWFLLFCRICIYLNSAINPVI. Residues 320-398 lie on the Cytoplasmic side of the membrane; the sequence is YNLMSQKFRA…LASEITFNQS (79 aa).

It belongs to the G-protein coupled receptor 1 family.

Its subcellular location is the cell membrane. In terms of biological role, receptor for thyrotropin-releasing hormone (TRH). Upon ligand binding, this G-protein-coupled receptor triggers activation of the phosphatidylinositol (IP3)-calcium-protein kinase C (PKC) pathway. The chain is Thyrotropin-releasing hormone receptor (TRHR) from Bos taurus (Bovine).